The following is a 137-amino-acid chain: Putative pre-16S rRNA nuclease (137 aa).

Belongs to the YqgF nuclease family.

Its subcellular location is the cytoplasm. Could be a nuclease involved in processing of the 5'-end of pre-16S rRNA. This Anaeromyxobacter sp. (strain Fw109-5) protein is Putative pre-16S rRNA nuclease.